We begin with the raw amino-acid sequence, 305 residues long: Ribonuclease HIII (305 aa).

Residues 91–305 (WSVIGSDEVG…ANTQKAQKLL (215 aa)) enclose the RNase H type-2 domain. A divalent metal cation is bound by residues Asp-97, Glu-98, and Asp-201.

The protein belongs to the RNase HII family. RnhC subfamily. Requires Mn(2+) as cofactor. It depends on Mg(2+) as a cofactor.

It is found in the cytoplasm. It carries out the reaction Endonucleolytic cleavage to 5'-phosphomonoester.. Its function is as follows. Endonuclease that specifically degrades the RNA of RNA-DNA hybrids. This Enterococcus faecalis (strain ATCC 700802 / V583) protein is Ribonuclease HIII.